A 452-amino-acid chain; its full sequence is UDP-N-acetylmuramoylalanine--D-glutamate ligase (452 aa).

115–121 contributes to the ATP binding site; sequence GTNGKTT.

This sequence belongs to the MurCDEF family.

It localises to the cytoplasm. The enzyme catalyses UDP-N-acetyl-alpha-D-muramoyl-L-alanine + D-glutamate + ATP = UDP-N-acetyl-alpha-D-muramoyl-L-alanyl-D-glutamate + ADP + phosphate + H(+). Its pathway is cell wall biogenesis; peptidoglycan biosynthesis. Functionally, cell wall formation. Catalyzes the addition of glutamate to the nucleotide precursor UDP-N-acetylmuramoyl-L-alanine (UMA). The sequence is that of UDP-N-acetylmuramoylalanine--D-glutamate ligase from Geobacter sp. (strain M21).